A 430-amino-acid polypeptide reads, in one-letter code: MSLMTKLGLRTLVASCLIAVGGAAHAQLNVLVTGVGSTQFPIATANFANEANSPQQVSTIVRQDLQRSGKFTNIDAGSTPVAETDSVDLGSWKAKGANAFVSGSVNRLPNGQYEVRFKLYDTVKGESLGGLVLVSPESGLRMSAHKVADYIYAKLMGGRGVFATRLSYVIKTGGRYQLQISDSDGQDAHIALSSPEPIISPAWSPDGTKVAYVSFEKKKPIVYIHDLPTGRRVVVSDQKGNNSAPAWSPDGRTLAVALSRTGNTQIFAVNADGSGLRRLTQGSSIDTEPCFSPDGQSIYFTSDRGGQPQIYKMSAQGENAGAAQRVTFTGSYNTSPRVSPDGKQLAYISRVGGGFKLYIQDLQGNTATGLTDTTHDESPSFAANGQYILYATQVNGRGVLAAVSTDGRTRQVLSVQGGSVREPSWGPFMQ.

An N-terminal signal peptide occupies residues Met-1–Ala-26.

Belongs to the TolB family. The Tol-Pal system is composed of five core proteins: the inner membrane proteins TolA, TolQ and TolR, the periplasmic protein TolB and the outer membrane protein Pal. They form a network linking the inner and outer membranes and the peptidoglycan layer.

The protein resides in the periplasm. Its function is as follows. Part of the Tol-Pal system, which plays a role in outer membrane invagination during cell division and is important for maintaining outer membrane integrity. The polypeptide is Tol-Pal system protein TolB (Paraburkholderia phytofirmans (strain DSM 17436 / LMG 22146 / PsJN) (Burkholderia phytofirmans)).